We begin with the raw amino-acid sequence, 254 residues long: Imidazole glycerol phosphate synthase subunit HisF (254 aa).

Catalysis depends on residues Asp-11 and Asp-130.

This sequence belongs to the HisA/HisF family. Heterodimer of HisH and HisF.

The protein localises to the cytoplasm. The enzyme catalyses 5-[(5-phospho-1-deoxy-D-ribulos-1-ylimino)methylamino]-1-(5-phospho-beta-D-ribosyl)imidazole-4-carboxamide + L-glutamine = D-erythro-1-(imidazol-4-yl)glycerol 3-phosphate + 5-amino-1-(5-phospho-beta-D-ribosyl)imidazole-4-carboxamide + L-glutamate + H(+). Its pathway is amino-acid biosynthesis; L-histidine biosynthesis; L-histidine from 5-phospho-alpha-D-ribose 1-diphosphate: step 5/9. In terms of biological role, IGPS catalyzes the conversion of PRFAR and glutamine to IGP, AICAR and glutamate. The HisF subunit catalyzes the cyclization activity that produces IGP and AICAR from PRFAR using the ammonia provided by the HisH subunit. The protein is Imidazole glycerol phosphate synthase subunit HisF of Chromobacterium violaceum (strain ATCC 12472 / DSM 30191 / JCM 1249 / CCUG 213 / NBRC 12614 / NCIMB 9131 / NCTC 9757 / MK).